Reading from the N-terminus, the 517-residue chain is Cytochrome P450 monooxygenase cdmJ (517 aa).

Residues 15–35 (YMWSLTLFALCLSAILMFPFL) traverse the membrane as a helical segment. N-linked (GlcNAc...) asparagine glycosylation occurs at Asn404. Cys451 serves as a coordination point for heme.

The protein belongs to the cytochrome P450 family. Heme is required as a cofactor.

The protein localises to the membrane. It catalyses the reaction 3-hydroxypentacecilide A + NADPH + O2 + H(+) = chrodrimanin F + NADP(+) + H2O. The enzyme catalyses chrodrimanin C + NADPH + O2 + H(+) = chrodrimanin H + NADP(+) + H2O. It carries out the reaction verruculide A + NADPH + O2 + H(+) = chrodrimanin E + NADP(+) + H2O. The catalysed reaction is chrodrimanin T + NADPH + O2 + H(+) = chrodrimanin A + NADP(+) + H2O. The protein operates within secondary metabolite biosynthesis; terpenoid biosynthesis. Cytochrome P450 monooxygenase; part of the gene cluster that mediates the biosynthesis of chrodrimanin B, a meroterpenoid that acts as a potent blocker of insect GABA-gated chloride channels. The first step of the pathway is the biosynthesis of 6-hydroxymellein by the polyketide synthase cdmE. The prenyltransferase cdmH acts as a 6-hydroxymellein 5-farnesyltransferase and produces the hydrophobic metabolite verruculide C. The FAD-dependent monooxygenase cdmI further converts verruculide C into verruculide B. The terpene cyclase cdmG then produced the pentacyclic molecule 3-hydroxypentacecilide A, the backbone structure of chrodrimanin B, via folding the farnesyl moiety of the substrate into the chair-boat conformation. The short-chain dehydrogenase/reductase cdmF functions as the 3-OH dehydrogenase that oxidizes the C-3 hydroxyl group of 3-hydroxypentacecilide A and produces chrodrimanin C, the dehydrogenated product of 3-hydroxypentacecilide A. The cytochrome P450 monooxygenase cdmJ then accepts both 3-hydroxypentacecilide A and chrodrimanin C and functions as a C-7-beta-hydroxylase to produce respectively chrodrimanin H and chrodrimanin F. The dioxygenase cdmA accepts chrodrimanin H to afford chrodrimanin E, which is further transformed to chrodrimanin A by the dioxygenase cdmD. CdmA can also accept chrodrimanin C as substrate to convert it into verruculide A, which is further converted into chrodrimanin T by cdmD. The last step of the biosynthesis is proposed to be performed by the acetyltransferase cdmC which acetylates chrodrimanin A to yield chrodrimanin B. The pathway may also lead to the production of additional shunt products, including chrodrimanins T and U. This chain is Cytochrome P450 monooxygenase cdmJ, found in Talaromyces verruculosus (Penicillium verruculosum).